We begin with the raw amino-acid sequence, 92 residues long: Large ribosomal subunit protein eL43 (92 aa).

The C4-type zinc finger occupies 39–60 (CEFCGKFAVKRKAVGIWGCKDC).

The protein belongs to the eukaryotic ribosomal protein eL43 family.

The chain is Large ribosomal subunit protein eL43 (RPL37A) from Pseudotsuga menziesii (Douglas-fir).